A 330-amino-acid polypeptide reads, in one-letter code: Ketol-acid reductoisomerase (NADP(+)) (330 aa).

The 181-residue stretch at 1-181 folds into the KARI N-terminal Rossmann domain; that stretch reads MNAYYEQDAD…GGTKAGVIET (181 aa). Residues 24 to 27, arginine 47, serine 50, serine 52, and 82 to 85 each bind NADP(+); these read YGSQ and DQYQ. Histidine 107 is a catalytic residue. An NADP(+)-binding site is contributed by glycine 133. Residues 182 to 327 enclose the KARI C-terminal knotted domain; it reads TFKNETETDL…SKLRDMMSWL (146 aa). Aspartate 190, glutamate 194, glutamate 226, and glutamate 230 together coordinate Mg(2+). Serine 251 serves as a coordination point for substrate.

It belongs to the ketol-acid reductoisomerase family. Requires Mg(2+) as cofactor.

The enzyme catalyses (2R)-2,3-dihydroxy-3-methylbutanoate + NADP(+) = (2S)-2-acetolactate + NADPH + H(+). It carries out the reaction (2R,3R)-2,3-dihydroxy-3-methylpentanoate + NADP(+) = (S)-2-ethyl-2-hydroxy-3-oxobutanoate + NADPH + H(+). The protein operates within amino-acid biosynthesis; L-isoleucine biosynthesis; L-isoleucine from 2-oxobutanoate: step 2/4. It participates in amino-acid biosynthesis; L-valine biosynthesis; L-valine from pyruvate: step 2/4. Involved in the biosynthesis of branched-chain amino acids (BCAA). Catalyzes an alkyl-migration followed by a ketol-acid reduction of (S)-2-acetolactate (S2AL) to yield (R)-2,3-dihydroxy-isovalerate. In the isomerase reaction, S2AL is rearranged via a Mg-dependent methyl migration to produce 3-hydroxy-3-methyl-2-ketobutyrate (HMKB). In the reductase reaction, this 2-ketoacid undergoes a metal-dependent reduction by NADPH to yield (R)-2,3-dihydroxy-isovalerate. In Chlorobium limicola (strain DSM 245 / NBRC 103803 / 6330), this protein is Ketol-acid reductoisomerase (NADP(+)).